A 28-amino-acid polypeptide reads, in one-letter code: Conotoxin de7b (28 aa).

Intrachain disulfides connect Cys-2–Cys-18, Cys-9–Cys-22, and Cys-17–Cys-27. The residue at position 4 (Pro-4) is a 4-hydroxyproline; partial. Residue Glu-7 is modified to 4-carboxyglutamate; partial. Position 14 is a 4-hydroxyproline; partial (Pro-14).

In terms of tissue distribution, expressed by the venom duct.

The protein localises to the secreted. Functionally, may inhibit sodium (Nav) or calcium channels (Cav). The chain is Conotoxin de7b from Conasprella delessertii (Sozon's cone).